A 317-amino-acid polypeptide reads, in one-letter code: tRNA dimethylallyltransferase (317 aa).

14 to 21 provides a ligand contact to ATP; that stretch reads GPTAVGKT. 16 to 21 serves as a coordination point for substrate; the sequence is TAVGKT. Residues 39 to 42 form an interaction with substrate tRNA region; that stretch reads DSMQ.

The protein belongs to the IPP transferase family. Monomer. Mg(2+) serves as cofactor.

It catalyses the reaction adenosine(37) in tRNA + dimethylallyl diphosphate = N(6)-dimethylallyladenosine(37) in tRNA + diphosphate. In terms of biological role, catalyzes the transfer of a dimethylallyl group onto the adenine at position 37 in tRNAs that read codons beginning with uridine, leading to the formation of N6-(dimethylallyl)adenosine (i(6)A). This chain is tRNA dimethylallyltransferase, found in Bacillus cereus (strain G9842).